Consider the following 338-residue polypeptide: Nodulation outer protein L (338 aa).

Residues 1-14 (MDINSTSPLNASPQ) are compositionally biased toward polar residues. 4 disordered regions span residues 1-48 (MDIN…LPQV), 85-158 (TRER…DLET), 187-209 (SPAP…PHAR), and 230-259 (PQAG…SSAG). A compositionally biased stretch (basic and acidic residues) spans 85 to 97 (TRERSPHPSEQRP). Over residues 126–138 (VGPSRSGPSQAGL) the composition is skewed to polar residues. The segment covering 242-258 (SGPSQARPSHAWPSSSA) has biased composition (polar residues).

It localises to the secreted. In terms of biological role, putative symbiotic effector that modulates nodulation in legumes. When delivered into the plant cell, modulates the activity of signal transduction pathways that culminate in activation of PR proteins. In Sinorhizobium fredii (strain NBRC 101917 / NGR234), this protein is Nodulation outer protein L (nopL).